The chain runs to 153 residues: Superoxide dismutase [Cu-Zn] (153 aa).

Cu cation contacts are provided by histidine 45, histidine 47, and histidine 62. An intrachain disulfide couples cysteine 56 to cysteine 145. Zn(2+) contacts are provided by histidine 62, histidine 70, histidine 79, and aspartate 82. Position 119 (histidine 119) interacts with Cu cation.

Belongs to the Cu-Zn superoxide dismutase family. In terms of assembly, homodimer. Requires Cu cation as cofactor. Zn(2+) serves as cofactor.

It localises to the cytoplasm. It catalyses the reaction 2 superoxide + 2 H(+) = H2O2 + O2. Destroys radicals which are normally produced within the cells and which are toxic to biological systems. This Drosophila virilis (Fruit fly) protein is Superoxide dismutase [Cu-Zn].